Here is a 392-residue protein sequence, read N- to C-terminus: Formate-dependent phosphoribosylglycinamide formyltransferase (392 aa).

N(1)-(5-phospho-beta-D-ribosyl)glycinamide contacts are provided by residues 22–23 (EL) and glutamate 82. Residues arginine 114, lysine 155, 160 to 165 (SSGKGQ), 195 to 198 (EGVV), and glutamate 203 each bind ATP. In terms of domain architecture, ATP-grasp spans 119–308 (RLAAEELWVP…EFALHVRAFL (190 aa)). Mg(2+)-binding residues include glutamate 267 and glutamate 279. Residues aspartate 286, lysine 355, and 362–363 (RR) contribute to the N(1)-(5-phospho-beta-D-ribosyl)glycinamide site.

The protein belongs to the PurK/PurT family. As to quaternary structure, homodimer.

It catalyses the reaction N(1)-(5-phospho-beta-D-ribosyl)glycinamide + formate + ATP = N(2)-formyl-N(1)-(5-phospho-beta-D-ribosyl)glycinamide + ADP + phosphate + H(+). Its pathway is purine metabolism; IMP biosynthesis via de novo pathway; N(2)-formyl-N(1)-(5-phospho-D-ribosyl)glycinamide from N(1)-(5-phospho-D-ribosyl)glycinamide (formate route): step 1/1. Involved in the de novo purine biosynthesis. Catalyzes the transfer of formate to 5-phospho-ribosyl-glycinamide (GAR), producing 5-phospho-ribosyl-N-formylglycinamide (FGAR). Formate is provided by PurU via hydrolysis of 10-formyl-tetrahydrofolate. The polypeptide is Formate-dependent phosphoribosylglycinamide formyltransferase (Erwinia tasmaniensis (strain DSM 17950 / CFBP 7177 / CIP 109463 / NCPPB 4357 / Et1/99)).